We begin with the raw amino-acid sequence, 410 residues long: Putative ankyrin repeat protein FPV240 (410 aa).

ANK repeat units lie at residues Asn33–Tyr62, Asp66–Asp95, Lys100–Val129, Asp133–Ile162, Tyr166–Tyr195, and Pro200–Ile229.

The sequence is that of Putative ankyrin repeat protein FPV240 from Vertebrata (FPV).